The following is a 371-amino-acid chain: Bifunctional enzyme IspD/IspF (371 aa).

A 2-C-methyl-D-erythritol 4-phosphate cytidylyltransferase region spans residues 1–212 (MLDISLIMLG…CLIPPSNEHF (212 aa)). A 2-C-methyl-D-erythritol 2,4-cyclodiphosphate synthase region spans residues 212–371 (FTGIGFDAHE…ANLKYYDWTK (160 aa)). Positions 218 and 220 each coordinate a divalent metal cation. Residues 218 to 220 (DAH) and 244 to 245 (HS) each bind 4-CDP-2-C-methyl-D-erythritol 2-phosphate. His252 is an a divalent metal cation binding site. Residues 266–268 (DIG), 271–275 (FPDTD), 342–345 (TTTE), Phe349, and Arg352 each bind 4-CDP-2-C-methyl-D-erythritol 2-phosphate.

This sequence in the N-terminal section; belongs to the IspD/TarI cytidylyltransferase family. IspD subfamily. In the C-terminal section; belongs to the IspF family. Requires a divalent metal cation as cofactor.

The catalysed reaction is 2-C-methyl-D-erythritol 4-phosphate + CTP + H(+) = 4-CDP-2-C-methyl-D-erythritol + diphosphate. It carries out the reaction 4-CDP-2-C-methyl-D-erythritol 2-phosphate = 2-C-methyl-D-erythritol 2,4-cyclic diphosphate + CMP. It functions in the pathway isoprenoid biosynthesis; isopentenyl diphosphate biosynthesis via DXP pathway; isopentenyl diphosphate from 1-deoxy-D-xylulose 5-phosphate: step 2/6. Its pathway is isoprenoid biosynthesis; isopentenyl diphosphate biosynthesis via DXP pathway; isopentenyl diphosphate from 1-deoxy-D-xylulose 5-phosphate: step 4/6. In terms of biological role, bifunctional enzyme that catalyzes the formation of 4-diphosphocytidyl-2-C-methyl-D-erythritol from CTP and 2-C-methyl-D-erythritol 4-phosphate (MEP) (IspD), and catalyzes the conversion of 4-diphosphocytidyl-2-C-methyl-D-erythritol 2-phosphate (CDP-ME2P) to 2-C-methyl-D-erythritol 2,4-cyclodiphosphate (ME-CPP) with a corresponding release of cytidine 5-monophosphate (CMP) (IspF). This Campylobacter curvus (strain 525.92) protein is Bifunctional enzyme IspD/IspF.